A 280-amino-acid chain; its full sequence is Bis(5'-nucleosyl)-tetraphosphatase, symmetrical (280 aa).

This sequence belongs to the Ap4A hydrolase family.

It catalyses the reaction P(1),P(4)-bis(5'-adenosyl) tetraphosphate + H2O = 2 ADP + 2 H(+). In terms of biological role, hydrolyzes diadenosine 5',5'''-P1,P4-tetraphosphate to yield ADP. In Paracidovorax citrulli (strain AAC00-1) (Acidovorax citrulli), this protein is Bis(5'-nucleosyl)-tetraphosphatase, symmetrical.